The chain runs to 670 residues: UvrABC system protein B (670 aa).

A Helicase ATP-binding domain is found at 26–183 (NGLKSGLAFQ…QRLVDLQYNR (158 aa)). Residue 39–46 (GVTGSGKT) participates in ATP binding. The Beta-hairpin motif lies at 92-115 (YYDYYQPEAYVPSSDSFIEKDAAI). The Helicase C-terminal domain occupies 431–597 (QVDDLLSEIN…GLSKQVNDVM (167 aa)). In terms of domain architecture, UVR spans 630 to 665 (LKQIALSEKQMFACAKNLEFEKAALFRDEVTKLHEQ).

It belongs to the UvrB family. As to quaternary structure, forms a heterotetramer with UvrA during the search for lesions. Interacts with UvrC in an incision complex.

The protein localises to the cytoplasm. In terms of biological role, the UvrABC repair system catalyzes the recognition and processing of DNA lesions. A damage recognition complex composed of 2 UvrA and 2 UvrB subunits scans DNA for abnormalities. Upon binding of the UvrA(2)B(2) complex to a putative damaged site, the DNA wraps around one UvrB monomer. DNA wrap is dependent on ATP binding by UvrB and probably causes local melting of the DNA helix, facilitating insertion of UvrB beta-hairpin between the DNA strands. Then UvrB probes one DNA strand for the presence of a lesion. If a lesion is found the UvrA subunits dissociate and the UvrB-DNA preincision complex is formed. This complex is subsequently bound by UvrC and the second UvrB is released. If no lesion is found, the DNA wraps around the other UvrB subunit that will check the other stand for damage. The polypeptide is UvrABC system protein B (Psychromonas ingrahamii (strain DSM 17664 / CCUG 51855 / 37)).